The chain runs to 276 residues: 4-deoxy-L-threo-5-hexosulose-uronate ketol-isomerase 2 (276 aa).

Residues histidine 194, histidine 196, glutamate 201, and histidine 243 each contribute to the Zn(2+) site.

This sequence belongs to the KduI family. Requires Zn(2+) as cofactor.

The enzyme catalyses 5-dehydro-4-deoxy-D-glucuronate = 3-deoxy-D-glycero-2,5-hexodiulosonate. Its pathway is glycan metabolism; pectin degradation; 2-dehydro-3-deoxy-D-gluconate from pectin: step 4/5. In terms of biological role, catalyzes the isomerization of 5-dehydro-4-deoxy-D-glucuronate to 3-deoxy-D-glycero-2,5-hexodiulosonate. In Enterococcus faecalis (strain ATCC 700802 / V583), this protein is 4-deoxy-L-threo-5-hexosulose-uronate ketol-isomerase 2 (kduI2).